A 130-amino-acid chain; its full sequence is Large ribosomal subunit protein bL20 (130 aa).

The protein belongs to the bacterial ribosomal protein bL20 family.

Functionally, binds directly to 23S ribosomal RNA and is necessary for the in vitro assembly process of the 50S ribosomal subunit. It is not involved in the protein synthesizing functions of that subunit. The sequence is that of Large ribosomal subunit protein bL20 from Salinispora tropica (strain ATCC BAA-916 / DSM 44818 / JCM 13857 / NBRC 105044 / CNB-440).